A 160-amino-acid polypeptide reads, in one-letter code: Protein BOLA1, chloroplastic (160 aa).

Residues 1–50 (MFSSSIRLIVSGFHRTQPLKSPVNSPSVFISVPKFFNSESKSTGTGSRSV) constitute a chloroplast transit peptide. The span at 39 to 61 (ESKSTGTGSRSVAMSSVEKTGSD) shows a compositional bias: polar residues. A disordered region spans residues 39 to 66 (ESKSTGTGSRSVAMSSVEKTGSDSGAIE).

It belongs to the bolA/yrbA family. In terms of assembly, interacts in vitro with GRXS14, GRXS15, GRXS16 and GRXS17, but not with GRXC5. Interacts in vivo only with GRXS14 and GRXS16.

Its subcellular location is the plastid. It localises to the chloroplast. Functionally, may act either alone or in interaction with glutaredoxin as a redox-regulated transcriptional regulator, or as a factor regulating Fe-S cluster biogenesis. The glutaredoxin-BOLA1 heterodimers bind a labile, oxygen sensitive iron-sulfur cluster. This Arabidopsis thaliana (Mouse-ear cress) protein is Protein BOLA1, chloroplastic.